A 449-amino-acid chain; its full sequence is Asparagine--tRNA ligase (449 aa).

It belongs to the class-II aminoacyl-tRNA synthetase family. As to quaternary structure, homodimer.

It localises to the cytoplasm. It catalyses the reaction tRNA(Asn) + L-asparagine + ATP = L-asparaginyl-tRNA(Asn) + AMP + diphosphate + H(+). The chain is Asparagine--tRNA ligase from Mesomycoplasma hyopneumoniae (strain 232) (Mycoplasma hyopneumoniae).